The sequence spans 287 residues: Ribosomal RNA small subunit methyltransferase A (287 aa).

S-adenosyl-L-methionine is bound by residues Asn-18, Leu-20, Gly-45, Glu-66, Asp-91, and Asn-118.

The protein belongs to the class I-like SAM-binding methyltransferase superfamily. rRNA adenine N(6)-methyltransferase family. RsmA subfamily.

The protein resides in the cytoplasm. It carries out the reaction adenosine(1518)/adenosine(1519) in 16S rRNA + 4 S-adenosyl-L-methionine = N(6)-dimethyladenosine(1518)/N(6)-dimethyladenosine(1519) in 16S rRNA + 4 S-adenosyl-L-homocysteine + 4 H(+). Its function is as follows. Specifically dimethylates two adjacent adenosines (A1518 and A1519) in the loop of a conserved hairpin near the 3'-end of 16S rRNA in the 30S particle. May play a critical role in biogenesis of 30S subunits. This is Ribosomal RNA small subunit methyltransferase A from Haemophilus influenzae (strain ATCC 51907 / DSM 11121 / KW20 / Rd).